The following is a 603-amino-acid chain: Elongation factor 4 (603 aa).

A tr-type G domain is found at Lys-6–Ile-188. GTP contacts are provided by residues Asp-18–Thr-23 and Asn-135–Asp-138.

It belongs to the TRAFAC class translation factor GTPase superfamily. Classic translation factor GTPase family. LepA subfamily.

Its subcellular location is the cell membrane. It carries out the reaction GTP + H2O = GDP + phosphate + H(+). Required for accurate and efficient protein synthesis under certain stress conditions. May act as a fidelity factor of the translation reaction, by catalyzing a one-codon backward translocation of tRNAs on improperly translocated ribosomes. Back-translocation proceeds from a post-translocation (POST) complex to a pre-translocation (PRE) complex, thus giving elongation factor G a second chance to translocate the tRNAs correctly. Binds to ribosomes in a GTP-dependent manner. The chain is Elongation factor 4 from Finegoldia magna (strain ATCC 29328 / DSM 20472 / WAL 2508) (Peptostreptococcus magnus).